The following is a 216-amino-acid chain: MKQDSRFPNLFILDHPLIQHKLTHMRDKDTSTRTFRELLREITLLMGYEITRNLPITTKRVETPLVEIDAPVIAGKKLAIVPVLRAGVGMSDGLLELIPSARVGHIGVYRADDHRPVEYLVRLPDLEDRIFILCDPMVATGYSAAHAIDVLKRRGVPGERIMFLALVAAPEGVQVFQDAHPDVKLYVASLDSHLDDHAYIVPGLGDAGDRLFGTKN.

5-phospho-alpha-D-ribose 1-diphosphate is bound by residues Arg85, Arg110, and 135-143; that span reads DPMVATGYS. Uracil is bound by residues Ile200 and 205 to 207; that span reads GDA. Asp206 serves as a coordination point for 5-phospho-alpha-D-ribose 1-diphosphate.

The protein belongs to the UPRTase family. Mg(2+) serves as cofactor.

The enzyme catalyses UMP + diphosphate = 5-phospho-alpha-D-ribose 1-diphosphate + uracil. Its pathway is pyrimidine metabolism; UMP biosynthesis via salvage pathway; UMP from uracil: step 1/1. Its activity is regulated as follows. Allosterically activated by GTP. Functionally, catalyzes the conversion of uracil and 5-phospho-alpha-D-ribose 1-diphosphate (PRPP) to UMP and diphosphate. The polypeptide is Uracil phosphoribosyltransferase (Burkholderia thailandensis (strain ATCC 700388 / DSM 13276 / CCUG 48851 / CIP 106301 / E264)).